The following is a 94-amino-acid chain: Integration host factor subunit beta (94 aa).

This sequence belongs to the bacterial histone-like protein family. Heterodimer of an alpha and a beta chain.

This protein is one of the two subunits of integration host factor, a specific DNA-binding protein that functions in genetic recombination as well as in transcriptional and translational control. In Mannheimia succiniciproducens (strain KCTC 0769BP / MBEL55E), this protein is Integration host factor subunit beta.